Consider the following 333-residue polypeptide: Type II restriction enzyme XcyI (333 aa).

It belongs to the XcyI type II restriction endonuclease family. In terms of assembly, monomer. It depends on Mg(2+) as a cofactor.

It catalyses the reaction Endonucleolytic cleavage of DNA to give specific double-stranded fragments with terminal 5'-phosphates.. Functionally, a P subtype restriction enzyme that recognizes the double-stranded sequence 5'-CCCGGG-3' and cleaves after C-1. The sequence is that of Type II restriction enzyme XcyI (xcyIR) from Xanthomonas campestris pv. cyanopsidis.